A 227-amino-acid polypeptide reads, in one-letter code: uncharacterized protein (227 aa).

The next 2 helical transmembrane spans lie at 13–35 (CVRAYAVFAIAIMVLTVAWFAFS) and 155–177 (IFFRGCVVFLVMLTLTISSMVFL). Positions 192-227 (GDARPRPAGPQGTARSRTDEAQVSPGTPPECPVSVF) are disordered. Pro residues predominate over residues 217–227 (GTPPECPVSVF).

It localises to the cell membrane. This is an uncharacterized protein from Treponema pallidum (strain Nichols).